We begin with the raw amino-acid sequence, 215 residues long: Cytochrome b6 (215 aa).

The chain crosses the membrane as a helical span at residues 32-52 (IFYCLGGITLTCFLVQVATGF). Residue Cys-35 participates in heme c binding. Residues His-86 and His-100 each coordinate heme b. Transmembrane regions (helical) follow at residues 90–110 (ASMMVLMTILHVFRVYLTGGF), 116–136 (LTWVTGVVLAVLTASFGVTGY), and 186–206 (LHTFVLPLLTAVFMLMHFLMI). His-187 and His-202 together coordinate heme b.

The protein belongs to the cytochrome b family. PetB subfamily. In terms of assembly, the 4 large subunits of the cytochrome b6-f complex are cytochrome b6, subunit IV (17 kDa polypeptide, PetD), cytochrome f and the Rieske protein, while the 4 small subunits are PetG, PetL, PetM and PetN. The complex functions as a dimer. The cofactor is heme b. Heme c is required as a cofactor.

It is found in the plastid. It localises to the chloroplast thylakoid membrane. Its function is as follows. Component of the cytochrome b6-f complex, which mediates electron transfer between photosystem II (PSII) and photosystem I (PSI), cyclic electron flow around PSI, and state transitions. This is Cytochrome b6 from Citrus sinensis (Sweet orange).